We begin with the raw amino-acid sequence, 214 residues long: Ribonuclease P protein component 3 (214 aa).

It belongs to the eukaryotic/archaeal RNase P protein component 3 family. In terms of assembly, consists of a catalytic RNA component and at least 4-5 protein subunits.

It localises to the cytoplasm. The catalysed reaction is Endonucleolytic cleavage of RNA, removing 5'-extranucleotides from tRNA precursor.. In terms of biological role, part of ribonuclease P, a protein complex that generates mature tRNA molecules by cleaving their 5'-ends. In Thermococcus gammatolerans (strain DSM 15229 / JCM 11827 / EJ3), this protein is Ribonuclease P protein component 3.